A 349-amino-acid polypeptide reads, in one-letter code: Sperm acrosomal protein FSA-ACR.1 (349 aa).

An N-terminal signal peptide occupies residues 1–8 (MKEVYLVG). A disordered region spans residues 1–265 (MKEVYLVGYA…EQPSGIPPSS (265 aa)). The segment covering 63 to 114 (TSGEHTSVEHASAEHSSTEHTSGEHASGEHTSGERATGEHTSSEHATSEHTS) has biased composition (basic and acidic residues). 2 stretches are compositionally biased toward polar residues: residues 117 to 142 (QPSGEQPSGEKSSGEQPSGEKSSGEQ) and 154 to 171 (SGEQSSGEKSSAEQTSGE). A compositionally biased stretch (basic and acidic residues) spans 178 to 189 (PSGEHAVAEKPS). Residues 221 to 248 (EQASIEKASSEQASAEQASAEQASSEQA) are compositionally biased toward low complexity. N-linked (GlcNAc...) asparagine glycosylation is present at asparagine 342.

It to acrosomal proteins SP-10. As to expression, testis.

The protein localises to the cytoplasmic vesicle. Its subcellular location is the secretory vesicle. It is found in the acrosome. This Vulpes vulpes (Red fox) protein is Sperm acrosomal protein FSA-ACR.1.